Consider the following 546-residue polypeptide: Glucose-6-phosphate isomerase (546 aa).

Glu357 functions as the Proton donor in the catalytic mechanism. Catalysis depends on residues His389 and Lys509.

Belongs to the GPI family.

The protein resides in the cytoplasm. The enzyme catalyses alpha-D-glucose 6-phosphate = beta-D-fructose 6-phosphate. The protein operates within carbohydrate biosynthesis; gluconeogenesis. Its pathway is carbohydrate degradation; glycolysis; D-glyceraldehyde 3-phosphate and glycerone phosphate from D-glucose: step 2/4. Catalyzes the reversible isomerization of glucose-6-phosphate to fructose-6-phosphate. The protein is Glucose-6-phosphate isomerase of Anaeromyxobacter dehalogenans (strain 2CP-1 / ATCC BAA-258).